The primary structure comprises 408 residues: LysM domain-containing protein ARB_01488 (408 aa).

Positions methionine 1–alanine 17 are cleaved as a signal peptide. Residues serine 42–alanine 91 enclose the LysM 1 domain. The segment at serine 98–aspartate 178 is disordered. Residues aspartate 106 to proline 116 are compositionally biased toward pro residues. LysM domains follow at residues glutamine 270 to valine 320 and serine 360 to valine 406.

The protein localises to the secreted. Might have a role in sequestration of chitin oligosaccharides (breakdown products of fungal cell walls that are released during invasion and act as triggers of host immunity) to dampen host defense. The polypeptide is LysM domain-containing protein ARB_01488 (Arthroderma benhamiae (strain ATCC MYA-4681 / CBS 112371) (Trichophyton mentagrophytes)).